Reading from the N-terminus, the 358-residue chain is Glyoxylate/succinic semialdehyde reductase 2, chloroplastic (358 aa).

Residues 1-44 (MPLVSLSFASSSSKAMALCSICPRIPLRFRPKPISPFLSKPQIC) constitute a chloroplast transit peptide. Residues 70–84 (GFLG…MAQN) and T161 each bind NADP(+). K236 is an active-site residue. An NADP(+)-binding site is contributed by K304.

Belongs to the HIBADH-related family. NP60 subfamily.

The protein resides in the plastid. The protein localises to the chloroplast stroma. It carries out the reaction glycolate + NADP(+) = glyoxylate + NADPH + H(+). It catalyses the reaction 4-hydroxybutanoate + NADP(+) = succinate semialdehyde + NADPH + H(+). Its activity is regulated as follows. The ratio of NADPH/NADP(+) may regulate enzymatic activity. Its function is as follows. Catalyzes the NADPH-dependent reduction of glyoxylate to glycolate as well as succinic semialdehyde (SSA) to gamma-hydroxybutyrate in vitro. May function in redox homeostasis and play a role in oxidative stress tolerance by detoxifying glyoxylate and SSA generated in glycolate metabolism and GABA metabolism, respectively. This Arabidopsis thaliana (Mouse-ear cress) protein is Glyoxylate/succinic semialdehyde reductase 2, chloroplastic (GLYR2).